A 205-amino-acid chain; its full sequence is Ribonuclease HII (205 aa).

Residues 16–205 (VSEVGIDEVG…KSFLNQSDLI (190 aa)) enclose the RNase H type-2 domain. Residues Asp22, Glu23, and Asp118 each contribute to the a divalent metal cation site.

This sequence belongs to the RNase HII family. Requires Mn(2+) as cofactor. Mg(2+) is required as a cofactor.

Its subcellular location is the cytoplasm. The catalysed reaction is Endonucleolytic cleavage to 5'-phosphomonoester.. Functionally, endonuclease that specifically degrades the RNA of RNA-DNA hybrids. In Prochlorococcus marinus (strain MIT 9312), this protein is Ribonuclease HII.